The primary structure comprises 273 residues: 4-hydroxy-tetrahydrodipicolinate reductase (273 aa).

Residues 12 to 17 and E38 contribute to the NAD(+) site; that span reads GAGGRM. Residue R39 coordinates NADP(+). NAD(+) is bound by residues 102–104 and 126–129; these read GTT and AANF. H159 acts as the Proton donor/acceptor in catalysis. H160 serves as a coordination point for (S)-2,3,4,5-tetrahydrodipicolinate. K163 (proton donor) is an active-site residue. Position 169 to 170 (169 to 170) interacts with (S)-2,3,4,5-tetrahydrodipicolinate; that stretch reads GT.

This sequence belongs to the DapB family. As to quaternary structure, homotetramer.

The protein localises to the cytoplasm. The catalysed reaction is (S)-2,3,4,5-tetrahydrodipicolinate + NAD(+) + H2O = (2S,4S)-4-hydroxy-2,3,4,5-tetrahydrodipicolinate + NADH + H(+). It carries out the reaction (S)-2,3,4,5-tetrahydrodipicolinate + NADP(+) + H2O = (2S,4S)-4-hydroxy-2,3,4,5-tetrahydrodipicolinate + NADPH + H(+). It functions in the pathway amino-acid biosynthesis; L-lysine biosynthesis via DAP pathway; (S)-tetrahydrodipicolinate from L-aspartate: step 4/4. Catalyzes the conversion of 4-hydroxy-tetrahydrodipicolinate (HTPA) to tetrahydrodipicolinate. The chain is 4-hydroxy-tetrahydrodipicolinate reductase from Salmonella typhimurium (strain LT2 / SGSC1412 / ATCC 700720).